Reading from the N-terminus, the 431-residue chain is Histidinol dehydrogenase (431 aa).

NAD(+) is bound by residues Y130, Q191, and N214. Residues S237, Q261, and H264 each coordinate substrate. Q261 and H264 together coordinate Zn(2+). Catalysis depends on proton acceptor residues E329 and H330. The substrate site is built by H330, D363, E417, and H422. Position 363 (D363) interacts with Zn(2+). H422 contributes to the Zn(2+) binding site.

Belongs to the histidinol dehydrogenase family. It depends on Zn(2+) as a cofactor.

The catalysed reaction is L-histidinol + 2 NAD(+) + H2O = L-histidine + 2 NADH + 3 H(+). It functions in the pathway amino-acid biosynthesis; L-histidine biosynthesis; L-histidine from 5-phospho-alpha-D-ribose 1-diphosphate: step 9/9. In terms of biological role, catalyzes the sequential NAD-dependent oxidations of L-histidinol to L-histidinaldehyde and then to L-histidine. The polypeptide is Histidinol dehydrogenase (Psychrobacter arcticus (strain DSM 17307 / VKM B-2377 / 273-4)).